The sequence spans 380 residues: Deoxyguanosinetriphosphate triphosphohydrolase-like protein (380 aa).

Residues 1 to 28 (MYAPYATMPDRSRGRAVPEEESSFRSPF) form a disordered region. The region spanning 62–198 (RLTHSIEVGQ…AALADDIAYN (137 aa)) is the HD domain.

It belongs to the dGTPase family. Type 2 subfamily.

The chain is Deoxyguanosinetriphosphate triphosphohydrolase-like protein from Ruegeria sp. (strain TM1040) (Silicibacter sp.).